The primary structure comprises 384 residues: Protein V (384 aa).

Disordered regions lie at residues 1-23 (MDQD…GGRE) and 38-317 (SEPT…TKKG). Over residues 7 to 20 (ILKEDSEVEREAPG) the composition is skewed to basic and acidic residues. Residues 50-59 (LHNTINTPQG) are compositionally biased toward polar residues. S68 is subject to Phosphoserine; by host. The segment covering 83–101 (RSGEESRVSGRTSKPEAEA) has biased composition (basic and acidic residues). S125 carries the phosphoserine; by host modification. The span at 150–168 (GIEDENREMAAHPDKRGED) shows a compositional bias: basic and acidic residues. Over residues 191-206 (ASNNGRSMEPGSSHSA) the composition is skewed to polar residues. Phosphoserine; by host occurs at positions 192, 249, 257, and 260. Residues H318, C337, C341, C353, C355, C358, C362, and C365 each coordinate Zn(2+).

The protein belongs to the paramyxoviruses V protein family. In terms of assembly, interacts with host IFIH1/MDA5 and DHX58/LGP2. Interacts with host IRF3. Interacts with host RIGI regulatory protein (via CARDs domain) and host TRIM25 (via SPRY domain); these interactions prevent TRIM25-mediated ubiquitination of RIG-I and disrupts downstream RIG-I signaling.

The protein localises to the host cytoplasm. Plays an essential role in the inhibition of host immune response. Prevents the establishment of cellular antiviral state by blocking interferon-alpha/beta (IFN-alpha/beta) production and signaling pathway. Interacts with host IFIH1/MDA5 and DHX58/LGP2 to inhibit the transduction pathway involved in the activation of IFN-beta promoter, thus protecting the virus against cell antiviral state. Also interacts with and inhibits host IRF3. Blocks the type I interferon signaling pathway by disrupting the RIG-I signaling pathway. The polypeptide is Protein V (P/V/C) (Sendai virus (strain Fushimi) (SeV)).